The primary structure comprises 82 residues: DNA gyrase inhibitor YacG (82 aa).

The Zn(2+) site is built by Cys9, Cys12, Cys27, and Cys31. Residues 44–82 are disordered; that stretch reads IGLPHEGDPGDAPVEYLDDRDLTQPSPERQNESFHRYSE. Positions 72–82 are enriched in basic and acidic residues; that stretch reads RQNESFHRYSE.

Belongs to the DNA gyrase inhibitor YacG family. Interacts with GyrB. Zn(2+) serves as cofactor.

Functionally, inhibits all the catalytic activities of DNA gyrase by preventing its interaction with DNA. Acts by binding directly to the C-terminal domain of GyrB, which probably disrupts DNA binding by the gyrase. This Rhodopirellula baltica (strain DSM 10527 / NCIMB 13988 / SH1) protein is DNA gyrase inhibitor YacG.